Reading from the N-terminus, the 214-residue chain is Acetoin utilization protein AcuB (214 aa).

CBS domains follow at residues 7 to 66 and 78 to 135; these read MKRD…ENKR and MKKD…GADQ.

In terms of assembly, interacts with YabA.

It functions in the pathway ketone degradation; acetoin degradation. Role in growth and sporulation on acetoin or butanediol. Involved in the breakdown of these compounds used as a carbon source. The polypeptide is Acetoin utilization protein AcuB (acuB) (Bacillus subtilis (strain 168)).